Consider the following 26-residue polypeptide: FTPEDFISAPRRGEAIPDPKGELAVF.

The tract at residues 1-26 (FTPEDFISAPRRGEAIPDPKGELAVF) is disordered. Residues 11–26 (RRGEAIPDPKGELAVF) show a composition bias toward basic and acidic residues.

In Trichophyton tonsurans (Scalp ringworm fungus), this protein is 83 kDa hypersensitivity protein.